A 489-amino-acid chain; its full sequence is Coiled-coil domain-containing protein 77 (489 aa).

Ser38 carries the post-translational modification Phosphoserine. Coiled-coil stretches lie at residues 57–120 (SQEL…QVCL) and 212–487 (ERHQ…NALR).

The protein is Coiled-coil domain-containing protein 77 (Ccdc77) of Mus musculus (Mouse).